The following is a 518-amino-acid chain: Lysine--tRNA ligase (518 aa).

The segment at 1–28 (MTEPTQPNAAQPDAARPNVAPEMDDNKI) is disordered. Glu-428 and Glu-435 together coordinate Mg(2+).

The protein belongs to the class-II aminoacyl-tRNA synthetase family. Homodimer. Mg(2+) serves as cofactor.

It is found in the cytoplasm. It catalyses the reaction tRNA(Lys) + L-lysine + ATP = L-lysyl-tRNA(Lys) + AMP + diphosphate. This chain is Lysine--tRNA ligase, found in Paraburkholderia phytofirmans (strain DSM 17436 / LMG 22146 / PsJN) (Burkholderia phytofirmans).